The sequence spans 137 residues: Large ribosomal subunit protein uL16 (137 aa).

Belongs to the universal ribosomal protein uL16 family. In terms of assembly, part of the 50S ribosomal subunit.

Its function is as follows. Binds 23S rRNA and is also seen to make contacts with the A and possibly P site tRNAs. The protein is Large ribosomal subunit protein uL16 of Afipia carboxidovorans (strain ATCC 49405 / DSM 1227 / KCTC 32145 / OM5) (Oligotropha carboxidovorans).